Consider the following 739-residue polypeptide: Disintegrin and metalloproteinase domain-containing protein 18 (739 aa).

The signal sequence occupies residues 1–16 (MFLLLALLTELGRLQA). Residues 17–184 (HEGSEGIFLH…IKNLSKLLPQ (168 aa)) constitute a propeptide that is removed on maturation. N-linked (GlcNAc...) asparagine glycosylation is found at N36, N76, N122, N149, N156, N177, and N294. Topologically, residues 177–687 (NLSKLLPQYL…EKGYNTHWNN (511 aa)) are extracellular. The Peptidase M12B domain occupies 184–381 (QYLEIYIIVE…FETKCLQKLS (198 aa)). Disulfide bonds link C293–C376, C335–C360, C337–C342, and C450–C471. N359, N465, N561, N611, and N625 each carry an N-linked (GlcNAc...) asparagine glycan. The Disintegrin domain occupies 390–479 (QPVCGNGILE…NCVPDTYALN (90 aa)). The EGF-like domain occupies 620-654 (MGYNCNATTKCKGKGICNNFGNCQCFPGHRPPDCK). 3 cysteine pairs are disulfide-bonded: C624–C636, C630–C642, and C644–C653. The chain crosses the membrane as a helical span at residues 688–708 (WFILSFCIFLPFFIVFTTVIF). The Cytoplasmic portion of the chain corresponds to 709 to 739 (KRNEISKSCNRENAEYNRNSSVVSESDDVGH).

The prodomain and the metalloprotease-like domain are cleaved during the epididymal maturation of the spermatozoa. As to expression, expressed specifically in testis.

Its subcellular location is the membrane. In terms of biological role, sperm surface membrane protein that may be involved in spermatogenesis and fertilization. This is a non catalytic metalloprotease-like protein. The protein is Disintegrin and metalloproteinase domain-containing protein 18 (ADAM18) of Homo sapiens (Human).